The primary structure comprises 147 residues: UPF0208 membrane protein CGSHiEE_06015 (147 aa).

2 helical membrane-spanning segments follow: residues 38–58 (FAQK…QIYA) and 67–87 (IAIL…YWLG).

The protein belongs to the UPF0208 family.

It is found in the cell inner membrane. In Haemophilus influenzae (strain PittEE), this protein is UPF0208 membrane protein CGSHiEE_06015.